Reading from the N-terminus, the 569-residue chain is Cryptochrome DASH, chloroplastic/mitochondrial (569 aa).

One can recognise a Photolyase/cryptochrome alpha/beta domain in the interval 84–221; the sequence is GVTILWFRND…KLELIWGSTM (138 aa). FAD-binding positions include Tyr-316 and 329–333; that span reads STKFS. An ATP-binding site is contributed by Arg-436. FAD contacts are provided by Asp-466 and Asp-468. Asp-485 is a binding site for ATP. Residues 541 to 569 form a disordered region; the sequence is GNGPMAGGSKSGGGFRGSHSGRRSRHNGP. Residues 544–556 are compositionally biased toward gly residues; that stretch reads PMAGGSKSGGGFR. Residues 559 to 569 are compositionally biased toward basic residues; sequence HSGRRSRHNGP.

This sequence belongs to the DNA photolyase class-1 family. Homodimer. Requires FAD as cofactor. It depends on (6R)-5,10-methylene-5,6,7,8-tetrahydrofolate as a cofactor.

The protein resides in the plastid. It is found in the chloroplast. The protein localises to the mitochondrion. Functionally, may have a photoreceptor function. Binds ss- and ds-DNA in a sequence non-specific manner. Has a photolyase activity specific for cyclobutane pyrimidine dimers in ssDNA. The polypeptide is Cryptochrome DASH, chloroplastic/mitochondrial (CRYD) (Arabidopsis thaliana (Mouse-ear cress)).